Consider the following 143-residue polypeptide: Small ribosomal subunit protein uS12 (143 aa).

Residues 1-20 (MGKPRGLRTARKLKNHRREQ) are compositionally biased toward basic residues. The tract at residues 1-28 (MGKPRGLRTARKLKNHRREQRWHDKDYK) is disordered. Proline 62 is modified (hydroxyproline).

This sequence belongs to the universal ribosomal protein uS12 family. Component of the 40S small ribosomal subunit.

Its subcellular location is the cytoplasm. It is found in the cytosol. The protein localises to the rough endoplasmic reticulum. The sequence is that of Small ribosomal subunit protein uS12 (RPS23) from Lumbricus rubellus (Humus earthworm).